Here is a 356-residue protein sequence, read N- to C-terminus: MAKVMTVRGPIDHPETLGFTLTHEHLSLDFHHFYVAPPPGLDVYVNKKITLQNVGYIRQYPYSSAYNVNFEDDETHDAVLKDVMQYKACGGGAIVENTSHGINRNLKLLYNISEACSVHIVAGTGHYVQAVQPDSVTHMTIEEMGDLYTKEILFGTQVDTAANETTMIKCGMIGEVGSSWPITSFEKKAIQATAETQCVLNCPVTFHPGRDKDAPAEIVRLYLEAGGKADKCVMSHLDRTILDHGDLLEFAKLGTYCQFDLFGTECSYYQLNNTGYMPSDEQRIQSIEMMLQEGYEDRVLMSHDIHTKHRLTHFGGHGYSHILNNILMRLSLRGIDIKTVDNITIKNPAKWLEMKV.

Residues His-23, His-25, Glu-175, His-207, His-236, and Asp-304 each contribute to the a divalent metal cation site.

Belongs to the metallo-dependent hydrolases superfamily. Phosphotriesterase family. A divalent metal cation serves as cofactor.

The polypeptide is Phosphotriesterase-related protein (Aedes aegypti (Yellowfever mosquito)).